A 237-amino-acid polypeptide reads, in one-letter code: Ribonuclease PH (237 aa).

Phosphate-binding positions include Arg86 and 124–126 (GTR).

It belongs to the RNase PH family. As to quaternary structure, homohexameric ring arranged as a trimer of dimers.

It catalyses the reaction tRNA(n+1) + phosphate = tRNA(n) + a ribonucleoside 5'-diphosphate. Phosphorolytic 3'-5' exoribonuclease that plays an important role in tRNA 3'-end maturation. Removes nucleotide residues following the 3'-CCA terminus of tRNAs; can also add nucleotides to the ends of RNA molecules by using nucleoside diphosphates as substrates, but this may not be physiologically important. Probably plays a role in initiation of 16S rRNA degradation (leading to ribosome degradation) during starvation. This Shewanella frigidimarina (strain NCIMB 400) protein is Ribonuclease PH.